We begin with the raw amino-acid sequence, 801 residues long: Phenylalanine--tRNA ligase beta subunit (801 aa).

The tRNA-binding domain maps to 39-153 (AEGLSKLVVG…EGAIPGDSIF (115 aa)). The B5 domain occupies 406–481 (TEPVEVSTTL…RIYGYEKLPT (76 aa)). Positions 459, 465, 468, and 469 each coordinate Mg(2+). Residues 708-801 (TKYPSVSRDI…LVEKVNAEIR (94 aa)) form the FDX-ACB domain.

The protein belongs to the phenylalanyl-tRNA synthetase beta subunit family. Type 1 subfamily. As to quaternary structure, tetramer of two alpha and two beta subunits. The cofactor is Mg(2+).

Its subcellular location is the cytoplasm. It catalyses the reaction tRNA(Phe) + L-phenylalanine + ATP = L-phenylalanyl-tRNA(Phe) + AMP + diphosphate + H(+). The polypeptide is Phenylalanine--tRNA ligase beta subunit (Streptococcus agalactiae serotype V (strain ATCC BAA-611 / 2603 V/R)).